The primary structure comprises 610 residues: Phosphoenolpyruvate carboxykinase [GTP] (610 aa).

Residues Arg-82 and 221 to 223 (YGG) each bind substrate. Residues Lys-230 and His-250 each coordinate Mn(2+). Ser-272 serves as a coordination point for substrate. Residue 273–278 (ACGKTN) participates in GTP binding. Cys-274 is an active-site residue. A Mn(2+)-binding site is contributed by Asp-297. 387-389 (NSR) provides a ligand contact to substrate. Residues Arg-389, Arg-420, and 515–518 (FGDN) contribute to the GTP site.

Belongs to the phosphoenolpyruvate carboxykinase [GTP] family. As to quaternary structure, monomer. It depends on Mn(2+) as a cofactor.

The protein localises to the cytoplasm. The catalysed reaction is oxaloacetate + GTP = phosphoenolpyruvate + GDP + CO2. It participates in carbohydrate biosynthesis; gluconeogenesis. In terms of biological role, involved in the gluconeogenesis. Catalyzes the conversion of oxaloacetate (OAA) to phosphoenolpyruvate (PEP), the rate-limiting step in the metabolic pathway that produces glucose from lactate and other precursors derived from the citric acid cycle. This is Phosphoenolpyruvate carboxykinase [GTP] from Corynebacterium glutamicum (strain ATCC 13032 / DSM 20300 / JCM 1318 / BCRC 11384 / CCUG 27702 / LMG 3730 / NBRC 12168 / NCIMB 10025 / NRRL B-2784 / 534).